A 123-amino-acid chain; its full sequence is Large ribosomal subunit protein uL14 (123 aa).

It belongs to the universal ribosomal protein uL14 family. As to quaternary structure, part of the 50S ribosomal subunit. Forms a cluster with proteins L3 and L19. In the 70S ribosome, L14 and L19 interact and together make contacts with the 16S rRNA in bridges B5 and B8.

Functionally, binds to 23S rRNA. Forms part of two intersubunit bridges in the 70S ribosome. The polypeptide is Large ribosomal subunit protein uL14 (Koribacter versatilis (strain Ellin345)).